Consider the following 280-residue polypeptide: Probable N-acetyltransferase 14 (280 aa).

2 helical membrane-spanning segments follow: residues 37–57 (LILHLLTRPLALLLLAILSSI) and 60–80 (CVLHSFVLALVIPVFISVIYL). A disordered region spans residues 111 to 152 (PDLPNPHLGRAKLTTNQEKTRRRKKAKEKEKMNESEQVDEDE). The N-acetyltransferase domain occupies 116–273 (PHLGRAKLTT…EKGWLGYPLT (158 aa)).

This sequence belongs to the camello family.

It localises to the membrane. Functionally, probable acetyltransferase. The chain is Probable N-acetyltransferase 14 (nat14) from Danio rerio (Zebrafish).